We begin with the raw amino-acid sequence, 440 residues long: MTSIYHILDRIPAIYKQDMEIEYEYLAMQLIKSGKLRIDTNDCCNFARFTDPALNINLMISKEELTKPHLIPETTKLFQSLYKNSASDQKINSIFDNLKKQIQKLQPVKKEVTEMLARLFVQSAHPIVIRWLLLNKTEVFLTYSHNIGDMMDIVSWQRVGGNSGMQSTNGKDVAIFVSCGGNPFAENNKEHPSYGDGFAAVARLQIIAAQELGHFADIKRDDKGRQLTRHAANFSGTKATDKVRIARKSDIIHCNNLFNKLLNAGMKKQLEYETKLKFYNTNKINGVKVNAIKCMILIYKFRLLNYSSKNNLIFIRKFKTYKYMALMLEAMFKDMQDNLSPNAEVYKNKNPEIEEAIACIEALARVPQQTIKWGYLTTKETMHHLYKIYYNEVIPSLITSYNSFTGENYKRNLKKPKSSFFSKINIFSNKKLILKPVREL.

This is an uncharacterized protein from Rickettsia prowazekii (strain Madrid E).